We begin with the raw amino-acid sequence, 305 residues long: tRNA-cytidine(32) 2-sulfurtransferase (305 aa).

The disordered stretch occupies residues M1–R20. A PP-loop motif motif is present at residues S59–S64. [4Fe-4S] cluster contacts are provided by C134, C137, and C225. The disordered stretch occupies residues D282–D305.

The protein belongs to the TtcA family. In terms of assembly, homodimer. Mg(2+) serves as cofactor. The cofactor is [4Fe-4S] cluster.

It is found in the cytoplasm. It catalyses the reaction cytidine(32) in tRNA + S-sulfanyl-L-cysteinyl-[cysteine desulfurase] + AH2 + ATP = 2-thiocytidine(32) in tRNA + L-cysteinyl-[cysteine desulfurase] + A + AMP + diphosphate + H(+). It participates in tRNA modification. In terms of biological role, catalyzes the ATP-dependent 2-thiolation of cytidine in position 32 of tRNA, to form 2-thiocytidine (s(2)C32). The sulfur atoms are provided by the cysteine/cysteine desulfurase (IscS) system. This is tRNA-cytidine(32) 2-sulfurtransferase from Xanthomonas axonopodis pv. citri (strain 306).